We begin with the raw amino-acid sequence, 122 residues long: Large ribosomal subunit protein uL14 (122 aa).

It belongs to the universal ribosomal protein uL14 family. As to quaternary structure, part of the 50S ribosomal subunit. Forms a cluster with proteins L3 and L19. In the 70S ribosome, L14 and L19 interact and together make contacts with the 16S rRNA in bridges B5 and B8.

Its function is as follows. Binds to 23S rRNA. Forms part of two intersubunit bridges in the 70S ribosome. The sequence is that of Large ribosomal subunit protein uL14 from Nocardia farcinica (strain IFM 10152).